Reading from the N-terminus, the 736-residue chain is Elongation factor 2 (736 aa).

The tr-type G domain maps to 18–262; the sequence is TRVRNIGIIA…AVIKFVPNPV (245 aa). GTP is bound by residues 27 to 34, 93 to 97, and 147 to 150; these read AHVDHGKT, DTPGH, and NKVD. A Diphthamide modification is found at His-603.

It belongs to the TRAFAC class translation factor GTPase superfamily. Classic translation factor GTPase family. EF-G/EF-2 subfamily.

The protein resides in the cytoplasm. Catalyzes the GTP-dependent ribosomal translocation step during translation elongation. During this step, the ribosome changes from the pre-translocational (PRE) to the post-translocational (POST) state as the newly formed A-site-bound peptidyl-tRNA and P-site-bound deacylated tRNA move to the P and E sites, respectively. Catalyzes the coordinated movement of the two tRNA molecules, the mRNA and conformational changes in the ribosome. In Metallosphaera sedula (strain ATCC 51363 / DSM 5348 / JCM 9185 / NBRC 15509 / TH2), this protein is Elongation factor 2.